Here is a 445-residue protein sequence, read N- to C-terminus: Protein trichome berefringence-like 7 (445 aa).

A helical; Signal-anchor for type II membrane protein transmembrane segment spans residues 69-89 (IIAGTIVSFLVIIAGGYLYVV). The GDS motif signature appears at 188–190 (GDS). Residues 418 to 432 (DCSHWCLPGVPDIWN) carry the DCXHWCLPGXXDXWN motif motif.

This sequence belongs to the PC-esterase family. TBL subfamily.

The protein resides in the membrane. May act as a bridging protein that binds pectin and other cell wall polysaccharides. Probably involved in maintaining esterification of pectins. May be involved in the specific O-acetylation of cell wall polymers. This chain is Protein trichome berefringence-like 7 (TBL7), found in Arabidopsis thaliana (Mouse-ear cress).